The primary structure comprises 1251 residues: Phospholipid-transporting ATPase IC (1251 aa).

A disordered region spans residues 1-54 (MSTERDSETTFDEDSQPNDEVVPYSDDETEDELDDQGSAVEPEQNRVNREAEEN). Residues 1–108 (MSTERDSETT…TYKYNAFTFI (108 aa)) lie on the Cytoplasmic side of the membrane. A compositionally biased stretch (acidic residues) spans 25–35 (SDDETEDELDD). The span at 43–54 (EQNRVNREAEEN) shows a compositional bias: basic and acidic residues. The helical transmembrane segment at 109 to 130 (PMNLFEQFKRAANLYFLALLIL) threads the bilayer. The Exoplasmic loop segment spans residues 131–136 (QAVPQI). Residues 137–156 (STLAWYTTLVPLLVVLGVTA) form a helical membrane-spanning segment. The Cytoplasmic portion of the chain corresponds to 157–340 (IKDLVDDVAR…TKIDYLMNYM (184 aa)). Residues 341–362 (VYTIFVVLILLSAGLAIGHAYW) traverse the membrane as a helical segment. Residues 363–389 (EAQVGNSSWYLYDGEDDTPSYRGFLIF) are Exoplasmic loop-facing. The chain crosses the membrane as a helical span at residues 390–411 (WGYIIVLNTMVPISLYVSVEVI). The Cytoplasmic segment spans residues 412 to 949 (RLGQSHFINW…GRWSYIRMCK (538 aa)). Asp-454 functions as the 4-aspartylphosphate intermediate in the catalytic mechanism. Positions 454, 455, 456, 555, 596, 619, 652, 732, 733, 734, 867, and 873 each coordinate ATP. Asp-454 provides a ligand contact to Mg(2+). Thr-456 provides a ligand contact to Mg(2+). Asp-893 contacts Mg(2+). Asn-896 and Asp-897 together coordinate ATP. Asp-897 serves as a coordination point for Mg(2+). Residues 950 to 970 (FLRYFFYKNFAFTLVHFWYSF) traverse the membrane as a helical segment. The Exoplasmic loop segment spans residues 971 to 982 (FNGYSAQTAYED). Residues 983–1002 (WFITLYNVLYTSLPVLLMGL) traverse the membrane as a helical segment. The Cytoplasmic portion of the chain corresponds to 1003 to 1032 (LDQDVSDKLSLRFPGLYIVGQRDLLFNYKR). Residues 1033 to 1054 (FFVSLLHGVLTSMILFFIPLGA) form a helical membrane-spanning segment. The Exoplasmic loop segment spans residues 1055 to 1068 (YLQTVGQDGEAPSD). Residues 1069-1091 (YQSFAVTIASALVITVNFQIGLD) traverse the membrane as a helical segment. Residues 1092 to 1097 (TSYWTF) lie on the Cytoplasmic side of the membrane. The chain crosses the membrane as a helical span at residues 1098 to 1118 (VNAFSIFGSIALYFGIMFDFH). The Exoplasmic loop segment spans residues 1119–1138 (SAGIHVLFPSAFQFTGTASN). Residues 1139–1163 (ALRQPYIWLTIILAVAVCLLPVVAI) form a helical membrane-spanning segment. At 1164–1251 (RFLSMTIWPS…TAEYRRTGDS (88 aa)) the chain is on the cytoplasmic side. Ser-1223 carries the post-translational modification Phosphoserine.

The protein belongs to the cation transport ATPase (P-type) (TC 3.A.3) family. Type IV subfamily. Component of a P4-ATPase flippase complex which consists of a catalytic alpha subunit ATP8B1 and an accessory beta subunit TMEM30A. The flippase ATP8B1:TMEM30A complex can form an intermediate phosphoenzyme in vitro. Also interacts with beta subunit TMEM30B. Mg(2+) is required as a cofactor. In terms of tissue distribution, found in most tissues except brain and skeletal muscle. Most abundant in pancreas and small intestine.

Its subcellular location is the cell membrane. It localises to the apical cell membrane. The protein resides in the cell projection. It is found in the stereocilium. The protein localises to the endoplasmic reticulum. Its subcellular location is the golgi apparatus. It catalyses the reaction ATP + H2O + phospholipidSide 1 = ADP + phosphate + phospholipidSide 2.. The catalysed reaction is a 1,2-diacyl-sn-glycero-3-phosphocholine(out) + ATP + H2O = a 1,2-diacyl-sn-glycero-3-phosphocholine(in) + ADP + phosphate + H(+). It carries out the reaction a 1,2-diacyl-sn-glycero-3-phospho-L-serine(out) + ATP + H2O = a 1,2-diacyl-sn-glycero-3-phospho-L-serine(in) + ADP + phosphate + H(+). Its function is as follows. Catalytic component of a P4-ATPase flippase complex which catalyzes the hydrolysis of ATP coupled to the transport of phospholipids, in particular phosphatidylcholines (PC), from the outer to the inner leaflet of the plasma membrane. May participate in the establishment of the canalicular membrane integrity by ensuring asymmetric distribution of phospholipids in the canicular membrane. Thus may have a role in the regulation of bile acids transport into the canaliculus, uptake of bile acids from intestinal contents into intestinal mucosa or both and protect hepatocytes from bile salts. Involved in the microvillus formation in polarized epithelial cells; the function seems to be independent from its flippase activity. Participates in correct apical membrane localization of CDC42, CFTR and SLC10A2. Enables CDC42 clustering at the apical membrane during enterocyte polarization through the interaction between CDC42 polybasic region and negatively charged membrane lipids provided by ATP8B1. Together with TMEM30A is involved in uptake of the synthetic drug alkylphospholipid perifosine. Required for the preservation of cochlear hair cells in the inner ear. May act as cardiolipin transporter during inflammatory injury. This Homo sapiens (Human) protein is Phospholipid-transporting ATPase IC.